A 183-amino-acid polypeptide reads, in one-letter code: ATP synthase subunit delta (183 aa).

This sequence belongs to the ATPase delta chain family. F-type ATPases have 2 components, F(1) - the catalytic core - and F(0) - the membrane proton channel. F(1) has five subunits: alpha(3), beta(3), gamma(1), delta(1), epsilon(1). F(0) has three main subunits: a(1), b(2) and c(10-14). The alpha and beta chains form an alternating ring which encloses part of the gamma chain. F(1) is attached to F(0) by a central stalk formed by the gamma and epsilon chains, while a peripheral stalk is formed by the delta and b chains.

Its subcellular location is the cell membrane. Its function is as follows. F(1)F(0) ATP synthase produces ATP from ADP in the presence of a proton or sodium gradient. F-type ATPases consist of two structural domains, F(1) containing the extramembraneous catalytic core and F(0) containing the membrane proton channel, linked together by a central stalk and a peripheral stalk. During catalysis, ATP synthesis in the catalytic domain of F(1) is coupled via a rotary mechanism of the central stalk subunits to proton translocation. Functionally, this protein is part of the stalk that links CF(0) to CF(1). It either transmits conformational changes from CF(0) to CF(1) or is implicated in proton conduction. This is ATP synthase subunit delta from Halalkalibacterium halodurans (strain ATCC BAA-125 / DSM 18197 / FERM 7344 / JCM 9153 / C-125) (Bacillus halodurans).